Reading from the N-terminus, the 550-residue chain is Hydroxylamine reductase (550 aa).

Positions 3, 6, 18, and 25 each coordinate [2Fe-2S] cluster. Hybrid [4Fe-2O-2S] cluster contacts are provided by His-249, Glu-273, Cys-317, Cys-405, Cys-433, Cys-458, Glu-492, and Lys-494. Residue Cys-405 is modified to Cysteine persulfide.

It belongs to the HCP family. It depends on [2Fe-2S] cluster as a cofactor. Requires hybrid [4Fe-2O-2S] cluster as cofactor.

It localises to the cytoplasm. It catalyses the reaction A + NH4(+) + H2O = hydroxylamine + AH2 + H(+). Its function is as follows. Catalyzes the reduction of hydroxylamine to form NH(3) and H(2)O. The protein is Hydroxylamine reductase of Salmonella typhimurium (strain LT2 / SGSC1412 / ATCC 700720).